A 551-amino-acid chain; its full sequence is Sialic acid-binding Ig-like lectin 5 (551 aa).

The first 16 residues, 1–16 (MLPLLLLPLLWGGSLQ), serve as a signal peptide directing secretion. Topologically, residues 17–441 (EKPVYELQVQ…LGTGVVPAAL (425 aa)) are extracellular. Residues 19-136 (PVYELQVQKS…KYSYQQNKLN (118 aa)) form the Ig-like V-type domain. 3 cysteine pairs are disulfide-bonded: Cys-36–Cys-170, Cys-41–Cys-101, and Cys-164–Cys-213. Residue Asn-100 is glycosylated (N-linked (GlcNAc...) asparagine). N-acetylneuraminate-binding residues include Arg-119, Lys-127, and Ser-129. Positions 146-229 (PDIHFLEPLE…AQVTTERTVQ (84 aa)) constitute an Ig-like C2-type 1 domain. Positions 189-210 (DPETTRSSELTLTPRPEDHGTN) are disordered. N-linked (GlcNAc...) asparagine glycans are attached at residues Asn-210, Asn-231, and Asn-253. Residues 236 to 330 (PQTITIFRNG…GFLQIFLNLS (95 aa)) enclose the Ig-like C2-type 2 domain. A disulfide bridge links Cys-269 with Cys-314. Residues Asn-328, Asn-375, Asn-384, and Asn-393 are each glycosylated (N-linked (GlcNAc...) asparagine). A helical membrane pass occupies residues 442–462 (GGAGVMALLCICLCLIFFLIV). Topologically, residues 463-551 (KARRKQAAGR…TEYSEIKTSK (89 aa)) are cytoplasmic. The disordered stretch occupies residues 469–551 (AAGRPEKMDD…TEYSEIKTSK (83 aa)). Residues 518 to 523 (LHYASL) carry the ITIM motif motif. A compositionally biased stretch (basic and acidic residues) spans 528 to 537 (MKSREPKDQE). Positions 542–547 (TEYSEI) match the SLAM-like motif motif.

The protein belongs to the immunoglobulin superfamily. SIGLEC (sialic acid binding Ig-like lectin) family. As to expression, expressed by monocytic/myeloid lineage cells. Found at high levels in peripheral blood leukocytes, spleen, bone marrow and at lower levels in lymph node, lung, appendix, placenta, pancreas and thymus. Expressed by monocytes and neutrophils but absent from leukemic cell lines representing early stages of myelomonocytic differentiation.

The protein resides in the membrane. Functionally, putative adhesion molecule that mediates sialic-acid dependent binding to cells. Binds equally to alpha-2,3-linked and alpha-2,6-linked sialic acid. The sialic acid recognition site may be masked by cis interactions with sialic acids on the same cell surface. This Homo sapiens (Human) protein is Sialic acid-binding Ig-like lectin 5 (SIGLEC5).